We begin with the raw amino-acid sequence, 484 residues long: Antibiotic efflux pump outer membrane protein ArpC (484 aa).

Residues 1 to 17 (MTKSLLSLAVTAFILGG) form the signal peptide. Cys18 carries the N-palmitoyl cysteine lipid modification. Cys18 is lipidated: S-diacylglycerol cysteine.

This sequence belongs to the outer membrane factor (OMF) (TC 1.B.17) family.

Its subcellular location is the cell outer membrane. In terms of biological role, the outer membrane component of an antibiotic efflux pump. Confers resistance to numerous structurally unrelated antibiotics such as carbenicillin, chloramphenicol, erythromycin, novobiocin, streptomycin and tetracycline. Is not involved in organic solvent efflux. The chain is Antibiotic efflux pump outer membrane protein ArpC (arpC) from Pseudomonas putida (Arthrobacter siderocapsulatus).